A 185-amino-acid chain; its full sequence is ATP synthase subunit b 2 (185 aa).

The segment at 1–23 (MAEGHGDAKGATAHTAADGGHKA) is disordered. Low complexity predominate over residues 9 to 18 (KGATAHTAAD). Residues 32-51 (TFASQLVSLTIAFVALYLIV) traverse the membrane as a helical segment.

The protein belongs to the ATPase B chain family. F-type ATPases have 2 components, F(1) - the catalytic core - and F(0) - the membrane proton channel. F(1) has five subunits: alpha(3), beta(3), gamma(1), delta(1), epsilon(1). F(0) has three main subunits: a(1), b(2) and c(10-14). The alpha and beta chains form an alternating ring which encloses part of the gamma chain. F(1) is attached to F(0) by a central stalk formed by the gamma and epsilon chains, while a peripheral stalk is formed by the delta and b chains.

Its subcellular location is the cell inner membrane. F(1)F(0) ATP synthase produces ATP from ADP in the presence of a proton or sodium gradient. F-type ATPases consist of two structural domains, F(1) containing the extramembraneous catalytic core and F(0) containing the membrane proton channel, linked together by a central stalk and a peripheral stalk. During catalysis, ATP synthesis in the catalytic domain of F(1) is coupled via a rotary mechanism of the central stalk subunits to proton translocation. In terms of biological role, component of the F(0) channel, it forms part of the peripheral stalk, linking F(1) to F(0). The b'-subunit is a diverged and duplicated form of b found in plants and photosynthetic bacteria. The chain is ATP synthase subunit b 2 (atpF2) from Rhodopseudomonas palustris (strain HaA2).